Here is a 110-residue protein sequence, read N- to C-terminus: Parvalbumin alpha (110 aa).

EF-hand domains follow at residues K39 to N74 and L78 to S110. Positions 52, 54, 56, 58, 60, 63, 91, 93, 95, 97, and 102 each coordinate Ca(2+).

This sequence belongs to the parvalbumin family.

In muscle, parvalbumin is thought to be involved in relaxation after contraction. It binds two calcium ions. The chain is Parvalbumin alpha from Aquarana catesbeiana (American bullfrog).